The chain runs to 396 residues: Inositol polyphosphate 1-phosphatase (396 aa).

Aspartate 54 serves as a coordination point for Li(+). Glutamate 79 lines the Mg(2+) pocket. Position 80 (glutamate 80) interacts with Li(+). The Mg(2+) site is built by aspartate 153 and isoleucine 155. Aspartate 156, serine 157, threonine 158, serine 264, lysine 266, glycine 286, alanine 287, lysine 290, and threonine 308 together coordinate 1D-myo-inositol 1,4-bisphosphate. Aspartate 313 lines the Mg(2+) pocket. Serine 314 is subject to Phosphoserine.

Belongs to the inositol monophosphatase superfamily. In terms of assembly, monomer. The cofactor is Mg(2+).

It carries out the reaction 1D-myo-inositol 1,4-bisphosphate + H2O = 1D-myo-inositol 4-phosphate + phosphate. The catalysed reaction is 1D-myo-inositol 1,3,4-trisphosphate + H2O = 1D-myo-inositol 3,4-bisphosphate + phosphate. It functions in the pathway signal transduction; phosphatidylinositol signaling pathway. Inhibited by Li(+). Its function is as follows. Mg(2+)-dependent phosphatase that catalyzes the hydrolysis of the 1-position phosphate from inositol 1,4-bisphosphate and inositol 1,3,4-trisphosphate and participates in inositol phosphate metabolism. This is Inositol polyphosphate 1-phosphatase from Mus musculus (Mouse).